The chain runs to 368 residues: MHVVRLSIHRLRRFQTVELHPSSALNLLTGDNGAGKTSVLEALHLMAYGRSFRGRVRDGLIQQGANDLEVFVEWKEGGGAAVERTRRAGLRHSGQEWTGRLDGEDVAQLGSLCAALAVVTFEPGSHVLISGGGEPRRRFLDWGLFHVEPDFLTLWRRYARALKQRNALLKQGAQPRMLDAWDNELAESGETLTSRRMRYLERLQDRLVPVADAIAPALGLSALTFAPGWKRHEVSLADALLLARERDRQNGYTSQGPHRADWMPSFHALPGKDALSRGQAKLTALACLLAQAEDFAFERGEWPVIALDDLGSELDRHHQGRVLQRLASAPAQVLITATETPPGLADAAALLQQFHVEHGQIARQATVN.

G30–T37 is an ATP binding site.

This sequence belongs to the RecF family.

The protein resides in the cytoplasm. Functionally, the RecF protein is involved in DNA metabolism; it is required for DNA replication and normal SOS inducibility. RecF binds preferentially to single-stranded, linear DNA. It also seems to bind ATP. The chain is DNA replication and repair protein RecF from Xanthomonas axonopodis pv. citri (strain 306).